The sequence spans 296 residues: Glycine--tRNA ligase alpha subunit (296 aa).

This sequence belongs to the class-II aminoacyl-tRNA synthetase family. As to quaternary structure, tetramer of two alpha and two beta subunits.

Its subcellular location is the cytoplasm. The catalysed reaction is tRNA(Gly) + glycine + ATP = glycyl-tRNA(Gly) + AMP + diphosphate. The polypeptide is Glycine--tRNA ligase alpha subunit (Listeria innocua serovar 6a (strain ATCC BAA-680 / CLIP 11262)).